The primary structure comprises 332 residues: Methionine import ATP-binding protein MetN (332 aa).

In terms of domain architecture, ABC transporter spans isoleucine 2–tyrosine 241. Residue glycine 38–serine 45 coordinates ATP.

This sequence belongs to the ABC transporter superfamily. Methionine importer (TC 3.A.1.24) family. In terms of assembly, the complex is composed of two ATP-binding proteins (MetN), two transmembrane proteins (MetI) and a solute-binding protein (MetQ).

The protein resides in the cell membrane. It catalyses the reaction L-methionine(out) + ATP + H2O = L-methionine(in) + ADP + phosphate + H(+). The catalysed reaction is D-methionine(out) + ATP + H2O = D-methionine(in) + ADP + phosphate + H(+). Its function is as follows. Part of the ABC transporter complex MetNIQ involved in methionine import. Responsible for energy coupling to the transport system. The sequence is that of Methionine import ATP-binding protein MetN from Symbiobacterium thermophilum (strain DSM 24528 / JCM 14929 / IAM 14863 / T).